A 469-amino-acid polypeptide reads, in one-letter code: Cysteine--tRNA ligase (469 aa).

Cysteine 33 serves as a coordination point for Zn(2+). Positions 35–45 (ATVQGLPHIGH) match the 'HIGH' region motif. Residues cysteine 211, histidine 236, and glutamate 240 each contribute to the Zn(2+) site. Positions 267–271 (KMSKS) match the 'KMSKS' region motif. Lysine 270 provides a ligand contact to ATP.

It belongs to the class-I aminoacyl-tRNA synthetase family. Monomer. Requires Zn(2+) as cofactor.

It is found in the cytoplasm. The enzyme catalyses tRNA(Cys) + L-cysteine + ATP = L-cysteinyl-tRNA(Cys) + AMP + diphosphate. The chain is Cysteine--tRNA ligase (cysS) from Mycobacterium tuberculosis (strain CDC 1551 / Oshkosh).